A 280-amino-acid chain; its full sequence is uncharacterized protein (280 aa).

In terms of domain architecture, DUF1279 spans 96 to 208 (DKSIGIFQRF…GYLSTPPPVK (113 aa)). A helical transmembrane segment spans residues 115–135 (VMVPVHIVTSTVWFGSFYYAA). Residues 207–274 (VKEFLQDKME…KLQETKDKMS (68 aa)) adopt a coiled-coil conformation. The segment at 245 to 280 (SERMEETKERFSETKDKFSEKLQETKDKMSFRKKAD) is disordered.

Its subcellular location is the membrane. This is an uncharacterized protein from Danio rerio (Zebrafish).